A 246-amino-acid chain; its full sequence is MEVIKVGGEVLDRVEDLARVIDDSILVHGGGPEVSDVMERMGLEPRFVRGLRVTDRETLQVVMMVLAGLVNKRLVAELRSEGINALGLSGVDGGLLIAEKRSEVVDGEEVDLGYVGDVKRVNAELLESLLDAGYVPVVAPLGAGEDGTVYNVNADTAAGAIAGAVRADRLVLLTDVPGVLEDLDDPETLIERVRPEDVEELEEKGIVTGGMVPKLEAAKMAVEAGCREAVITNLEGLLEGRGTIVR.

Substrate is bound by residues 30–31 (GG), Arg52, and Asn151.

It belongs to the acetylglutamate kinase family. ArgB subfamily.

It localises to the cytoplasm. It catalyses the reaction N-acetyl-L-glutamate + ATP = N-acetyl-L-glutamyl 5-phosphate + ADP. Its pathway is amino-acid biosynthesis; L-arginine biosynthesis; N(2)-acetyl-L-ornithine from L-glutamate: step 2/4. Its function is as follows. Catalyzes the ATP-dependent phosphorylation of N-acetyl-L-glutamate. This is Acetylglutamate kinase from Methanopyrus kandleri (strain AV19 / DSM 6324 / JCM 9639 / NBRC 100938).